The primary structure comprises 103 residues: Large ribosomal subunit protein bL21 (103 aa).

Belongs to the bacterial ribosomal protein bL21 family. Part of the 50S ribosomal subunit. Contacts protein L20.

This protein binds to 23S rRNA in the presence of protein L20. This is Large ribosomal subunit protein bL21 from Actinobacillus pleuropneumoniae serotype 7 (strain AP76).